Consider the following 456-residue polypeptide: Major facilitator superfamily domain-containing protein 10 (456 aa).

11 consecutive transmembrane segments (helical) span residues 25–45, 87–107, 125–145, 149–169, 179–199, 204–224, 278–298, 311–328, 343–363, 365–385, and 422–442; these read VVAVVFLGLLLDLLAFTLLLP, VLFGGLIGSVFSLLQFLSAPL, LAGVATSYAVWAASKSFAAFL, VIGGISKGNVSLCTAIVADLG, AVIGVAFSLGFTLGPTLGAFL, VPWLALLFAVSDLLFIWCFLP, LVYFLYLFLFSGLEFTLSFLV, KMFFFIGLTMATIQGAYA, AILLLIPASLFVGWGHTLPIL, LGLLLYSWAAAVVVPCLSSVV, and LAGARVCYTVCAALFLLPFSI.

The protein belongs to the major facilitator superfamily.

It localises to the nucleus inner membrane. It is found in the cell membrane. Its function is as follows. Probable organic anion transporter which may serve as a transporter for some non-steroidal anti-inflammatory drugs (NSAIDs) as well as other organic anions across the luminal membranes of renal proximal tubules at the final excretion step into the urine. The polypeptide is Major facilitator superfamily domain-containing protein 10 (MFSD10) (Bos taurus (Bovine)).